We begin with the raw amino-acid sequence, 248 residues long: MEWTDDGIVLGLRRHGESSAVLELLTREHGRHLGLVRGASGARMRPMLQPGNTVRAVWRARLDEHLGMYAIDGLTLRAAELMSVAHGAYGVTHLAALARLLPERDPHQEMYLRLEHALDDFAEAGGAAVHIVRFELAILAELGFGLDLESCAATGETTDLVYVSPKSGGAVSRSAGAPWADRLLPLPPFLRESEDDHGFSDQDLLDGFRLTGLFLLRHVLEPRGQGHSDAREGFINAVTRARARLAQV.

It belongs to the RecO family.

In terms of biological role, involved in DNA repair and RecF pathway recombination. This is DNA repair protein RecO from Bradyrhizobium sp. (strain BTAi1 / ATCC BAA-1182).